The following is a 34-amino-acid chain: Voltage sensor toxin 3 (34 aa).

3 disulfide bridges follow: C2–C17, C9–C22, and C16–C29.

It belongs to the neurotoxin 10 (Hwtx-1) family. 61 (VSTX3) subfamily. In terms of tissue distribution, expressed by the venom gland.

It is found in the secreted. Functionally, potent voltage-gated sodium channel blocker (IC(50)=190 nM and 210 nM on human and rat Nav1.3/SCN3A respectively, 430 nM on human Nav1.7/SCN9A, 770 nM and 290 nM on human and rat Nav1.8/SCN10A, respectively). Binds the voltage-sensor domain of the potassium channel KvAP (from Aeropyrum pernix) and weakly inhibits this channel. This Grammostola rosea (Chilean rose tarantula) protein is Voltage sensor toxin 3.